The primary structure comprises 160 residues: UPF0178 protein PA5247 (160 aa).

This sequence belongs to the UPF0178 family.

This Pseudomonas aeruginosa (strain ATCC 15692 / DSM 22644 / CIP 104116 / JCM 14847 / LMG 12228 / 1C / PRS 101 / PAO1) protein is UPF0178 protein PA5247.